A 446-amino-acid polypeptide reads, in one-letter code: Glutamate-1-semialdehyde 2,1-aminomutase (446 aa).

Position 264 is an N6-(pyridoxal phosphate)lysine (Lys-264).

This sequence belongs to the class-III pyridoxal-phosphate-dependent aminotransferase family. HemL subfamily. Pyridoxal 5'-phosphate is required as a cofactor.

It localises to the cytoplasm. The catalysed reaction is (S)-4-amino-5-oxopentanoate = 5-aminolevulinate. It participates in porphyrin-containing compound metabolism; protoporphyrin-IX biosynthesis; 5-aminolevulinate from L-glutamyl-tRNA(Glu): step 2/2. The protein is Glutamate-1-semialdehyde 2,1-aminomutase of Natronomonas pharaonis (strain ATCC 35678 / DSM 2160 / CIP 103997 / JCM 8858 / NBRC 14720 / NCIMB 2260 / Gabara) (Halobacterium pharaonis).